Consider the following 529-residue polypeptide: Beta-hexosaminidase subunit alpha (529 aa).

The first 22 residues, 1–22, serve as a signal peptide directing secretion; it reads MTSSRLWFSLLLAAAFAGRATA. A propeptide spanning residues 23–88 is cleaved from the precursor; it reads LWPWPQNFQT…PRPYLTGKRH (66 aa). A disulfide bridge links Cys-58 with Cys-104. N-linked (GlcNAc...) asparagine glycans are attached at residues Asn-115, Asn-157, and Asn-295. A disulfide bridge connects residues Cys-277 and Cys-328. The active-site Proton donor is Glu-323. Positions 423 to 424 are critical for hydrolysis GM2 gangliosides; it reads NR. A disulfide bridge links Cys-505 with Cys-522.

The protein belongs to the glycosyl hydrolase 20 family. In terms of assembly, there are 3 beta-hexosaminidase isozymes: isozyme A (hexosaminidase A) is a heterodimer composed of one subunit alpha and one subunit beta (chain A and B); isozyme B (hexosaminidase B) is a homodimer of two beta subunits (two chains A and B); isozyme S (hexosaminidase S) is a homodimer of two alpha subunits. The composition of the dimer (isozyme A versus isozyme S) has a significant effect on the substrate specificity of the alpha subunit active site. N-linked glycan at Asn-115 consists of Man(3)-GlcNAc(2). N-linked glycan at Asn-157 consists of either GlcNAc or GlcNAc(2)-Man(7-9). N-linked glycan at Asn-295 consists of either GlcNAc, GlcNAc-Fuc, or GlcNAc(2)-Man(4).

The protein localises to the lysosome. The catalysed reaction is Hydrolysis of terminal non-reducing N-acetyl-D-hexosamine residues in N-acetyl-beta-D-hexosaminides.. It carries out the reaction N-acetyl-beta-D-galactosaminyl-(1-&gt;4)-beta-D-3-sulfogalactosyl-(1-&gt;4)-beta-D-glucosyl-(1&lt;-&gt;1')-ceramide + H2O = a beta-D-3-sulfogalactosyl-(1-&gt;4)-beta-D-glucosyl-(1&lt;-&gt;1')-ceramide + N-acetyl-beta-D-galactosamine. It catalyses the reaction a ganglioside GM2 (d18:1(4E)) + H2O = a ganglioside GM3 (d18:1(4E)) + N-acetyl-beta-D-galactosamine. The enzyme catalyses a ganglioside GM2 + H2O = a ganglioside GM3 + N-acetyl-beta-D-galactosamine. The catalysed reaction is beta-D-GalNAc-(1-&gt;4)-alpha-L-IdoA-(1-&gt;3)-beta-D-GalNAc-4-sulfate-(1-&gt;4)-alpha-L-IdoA-(1-&gt;3)-D-GalNAc-4-sulfate + H2O = alpha-L-IdoA-(1-&gt;3)-beta-D-GalNAc-4-sulfate-(1-&gt;4)-alpha-L-IdoA-(1-&gt;3)-D-GalNAc-4-sulfate + N-acetyl-D-galactosamine. It carries out the reaction N-acetyl-beta-D-6-sulfogalactosaminyl-(1-&gt;4)-alpha-L-iduronyl-(1-&gt;3)-N-acetyl-D-6-sulfogalactosamine + H2O = alpha-L-iduronyl-(1-&gt;3)-N-acetyl-D-6-sulfogalactosamine + N-acetyl-D-6-sulfogalactosamine. Its activity is regulated as follows. Addition of GM2A stimulates the hydrolysis of sulfated glycosphingolipid SM2 and the ganglioside GM2. Hydrolyzes the non-reducing end N-acetyl-D-hexosamine and/or sulfated N-acetyl-D-hexosamine of glycoconjugates, such as the oligosaccharide moieties from proteins and neutral glycolipids, or from certain mucopolysaccharides. The isozyme S is as active as the isozyme A on the anionic bis-sulfated glycans, the chondroitin-6-sulfate trisaccharide (C6S-3), and the dermatan sulfate pentasaccharide, and the sulfated glycosphingolipid SM2. The isozyme B does not hydrolyze each of these substrates, however hydrolyzes efficiently neutral oligosaccharide. Only the isozyme A is responsible for the degradation of GM2 gangliosides in the presence of GM2A. The chain is Beta-hexosaminidase subunit alpha from Homo sapiens (Human).